Here is a 188-residue protein sequence, read N- to C-terminus: dCTP deaminase (188 aa).

DCTP-binding positions include 111–116 (KSTYAR), 135–137 (TLE), Q156, Y170, and Q180. E137 functions as the Proton donor/acceptor in the catalytic mechanism.

This sequence belongs to the dCTP deaminase family. Homotrimer.

It carries out the reaction dCTP + H2O + H(+) = dUTP + NH4(+). Its pathway is pyrimidine metabolism; dUMP biosynthesis; dUMP from dCTP (dUTP route): step 1/2. Catalyzes the deamination of dCTP to dUTP. The polypeptide is dCTP deaminase (Cupriavidus taiwanensis (strain DSM 17343 / BCRC 17206 / CCUG 44338 / CIP 107171 / LMG 19424 / R1) (Ralstonia taiwanensis (strain LMG 19424))).